Consider the following 73-residue polypeptide: uncharacterized protein (73 aa).

In terms of processing, N-glycosylated.

This is an uncharacterized protein from Saccharomyces cerevisiae (strain ATCC 204508 / S288c) (Baker's yeast).